Here is a 782-residue protein sequence, read N- to C-terminus: E3 ubiquitin-protein ligase SopA (782 aa).

The interval 136–171 (GVSVSANNRPTVSEGRTPPVSPSLSLQATSSPSSPA) is disordered. The span at 157-171 (PSLSLQATSSPSSPA) shows a compositional bias: low complexity. C753 acts as the Glycyl thioester intermediate in catalysis.

This sequence belongs to the SopA E3 ligase family. Ubiquitinated in the presence of host E1 ubiquitin-activating enzyme, E2 ubiquitin-conjugating enzyme and ubiquitin.

It localises to the secreted. Its subcellular location is the host cell. The enzyme catalyses S-ubiquitinyl-[E2 ubiquitin-conjugating enzyme]-L-cysteine + [acceptor protein]-L-lysine = [E2 ubiquitin-conjugating enzyme]-L-cysteine + N(6)-ubiquitinyl-[acceptor protein]-L-lysine.. Functionally, effector proteins function to alter host cell physiology and promote bacterial survival in host tissues. This protein is an E3 ubiquitin ligase that interferes with host's ubiquitination pathway. For instance, prevents host innate immune response by ubiquitinating and thus sending to degradation host E3 ubiquitin ligases TRIM56 and TRIM65. The protein is E3 ubiquitin-protein ligase SopA (sopA) of Salmonella typhimurium (strain D23580).